The sequence spans 686 residues: MILIIAEKPNVARKIAGALSERRPIKKSLFGVPYYEIFREGKKLIVASAVGHLYGLAPKRDVFGYPIFDIEWVPVYIAEKGKEYAREYIKALSVLAKRVREFIVACDYDTEGEVIGYTALKYACGVDPRVAKRMKFSALTKRDLLNAWRNLEPTINFGMANAGIARHILDWYWGVNLSRALTHAIKKASGKWVVLSTGRVQGPTLKFLVEREREIQSFVPRPYWVIKLIFEKNGQKFTANYEKDKIWEEEEGKRIVLEVKKSIPRVSNVEIKRQKRTPPHPFDLGTLQREAYSAFGFSPKKTLDIAQSLYEKGFSSYPRTESQKLPRNINFRMIIQNLAKMPQYRPYAHILLGLPELKPVEGKKEDPAHPAIYPTGEIPRPGDLTKDEEKLYDMIVRRFLAVFMEPAIRESVKVTIRAGPHKFFLSGGRTVKKGWLSVYGKYVKFEEVTLPEFFIGERIKVIQVKREKKKTKPPARYSPAAVIKKMEDLGLGTKATRAQILETLYQRGYIEGKKSIKVTPLGMKVIETLEKYVPEIISVELTREFEKKMELIMEGRLTKEEVIEEAKERLTKILEEFKKRELEIGIELAKIVVGEDEVKPLVVGKCPKCGGDLIVKYNKKTGKRFVGCSNWPKCDVTYPILQRGEIIPTNKTCCNGAPVVIIREEDGREFEICLDINCKDWKAKSH.

Residues 1-141 (MILIIAEKPN…KRMKFSALTK (141 aa)) form the Toprim domain. Mg(2+) contacts are provided by Glu7 and Asp107. A Topo IA-type catalytic domain is found at 156–574 (NFGMANAGIA…EAKERLTKIL (419 aa)). The interaction with DNA stretch occupies residues 196–201 (STGRVQ). Tyr317 (O-(5'-phospho-DNA)-tyrosine intermediate) is an active-site residue. A C4-type 1 zinc finger spans residues 606-634 (CPKCGGDLIVKYNKKTGKRFVGCSNWPKC). The segment at 653–678 (CCNGAPVVIIREEDGREFEICLDINC) adopts a C4-type 2; atypical zinc-finger fold.

The protein belongs to the type IA topoisomerase family. Monomer. The cofactor is Mg(2+).

It catalyses the reaction ATP-independent breakage of single-stranded DNA, followed by passage and rejoining.. In terms of biological role, releases the supercoiling and torsional tension of DNA, which is introduced during the DNA replication and transcription, by transiently cleaving and rejoining one strand of the DNA duplex. Introduces a single-strand break via transesterification at a target site in duplex DNA. The scissile phosphodiester is attacked by the catalytic tyrosine of the enzyme, resulting in the formation of a DNA-(5'-phosphotyrosyl)-enzyme intermediate and the expulsion of a 3'-OH DNA strand. The free DNA strand then undergoes passage around the unbroken strand, thus removing DNA supercoils. Finally, in the religation step, the DNA 3'-OH attacks the covalent intermediate to expel the active-site tyrosine and restore the DNA phosphodiester backbone. This Pyrococcus horikoshii (strain ATCC 700860 / DSM 12428 / JCM 9974 / NBRC 100139 / OT-3) protein is DNA topoisomerase 1.